A 396-amino-acid polypeptide reads, in one-letter code: Obg-like ATPase 1 (396 aa).

The OBG-type G domain maps to 23–283; sequence LKIGIVGLPN…MSAEEKQKYL (261 aa). 32 to 37 provides a ligand contact to ATP; sequence NVGKST. S36 and T56 together coordinate Mg(2+). L231 contacts ATP. The Nuclear export signal motif lies at 267–274; sequence LELKLQDM. The region spanning 304–387 is the TGS domain; that stretch reads QLEYFFTAGP…EDGDIIFFKF (84 aa).

This sequence belongs to the TRAFAC class OBG-HflX-like GTPase superfamily. OBG GTPase family. YchF/OLA1 subfamily. In terms of assembly, monomer. The cofactor is Mg(2+).

It localises to the cytoplasm. Its subcellular location is the nucleus. The protein localises to the nucleolus. Hydrolyzes ATP, and can also hydrolyze GTP with lower efficiency. Has lower affinity for GTP. The sequence is that of Obg-like ATPase 1 from Gallus gallus (Chicken).